Consider the following 213-residue polypeptide: Nicotinate-nucleotide adenylyltransferase (213 aa).

It belongs to the NadD family.

It catalyses the reaction nicotinate beta-D-ribonucleotide + ATP + H(+) = deamido-NAD(+) + diphosphate. It functions in the pathway cofactor biosynthesis; NAD(+) biosynthesis; deamido-NAD(+) from nicotinate D-ribonucleotide: step 1/1. Its function is as follows. Catalyzes the reversible adenylation of nicotinate mononucleotide (NaMN) to nicotinic acid adenine dinucleotide (NaAD). This is Nicotinate-nucleotide adenylyltransferase from Salmonella typhimurium (strain LT2 / SGSC1412 / ATCC 700720).